The primary structure comprises 122 residues: Small ribosomal subunit protein uS13 (122 aa).

Residues 93–122 (RRGLPVRGQRTKTNARTRKGPKKTIAGKKK) form a disordered region.

Belongs to the universal ribosomal protein uS13 family. As to quaternary structure, part of the 30S ribosomal subunit. Forms a loose heterodimer with protein S19. Forms two bridges to the 50S subunit in the 70S ribosome.

Functionally, located at the top of the head of the 30S subunit, it contacts several helices of the 16S rRNA. In the 70S ribosome it contacts the 23S rRNA (bridge B1a) and protein L5 of the 50S subunit (bridge B1b), connecting the 2 subunits; these bridges are implicated in subunit movement. Contacts the tRNAs in the A and P-sites. The chain is Small ribosomal subunit protein uS13 from Corynebacterium efficiens (strain DSM 44549 / YS-314 / AJ 12310 / JCM 11189 / NBRC 100395).